Here is a 63-residue protein sequence, read N- to C-terminus: DNA-directed RNA polymerase subunit omega (63 aa).

It belongs to the RNA polymerase subunit omega family. The RNAP catalytic core consists of 2 alpha, 1 beta, 1 beta' and 1 omega subunit. When a sigma factor is associated with the core the holoenzyme is formed, which can initiate transcription.

It carries out the reaction RNA(n) + a ribonucleoside 5'-triphosphate = RNA(n+1) + diphosphate. Functionally, promotes RNA polymerase assembly. Latches the N- and C-terminal regions of the beta' subunit thereby facilitating its interaction with the beta and alpha subunits. The polypeptide is DNA-directed RNA polymerase subunit omega (Blochmanniella pennsylvanica (strain BPEN)).